The following is a 321-amino-acid chain: Anthranilate phosphoribosyltransferase (321 aa).

Residues G72, 75–76 (GD), T80, 82–85 (NVST), 99–107 (KHGNVSITS), and S111 each bind 5-phospho-alpha-D-ribose 1-diphosphate. G72 provides a ligand contact to anthranilate. S84 serves as a coordination point for Mg(2+). N102 contributes to the anthranilate binding site. An anthranilate-binding site is contributed by R157. D216 and E217 together coordinate Mg(2+).

The protein belongs to the anthranilate phosphoribosyltransferase family. In terms of assembly, homodimer. Mg(2+) is required as a cofactor.

The enzyme catalyses N-(5-phospho-beta-D-ribosyl)anthranilate + diphosphate = 5-phospho-alpha-D-ribose 1-diphosphate + anthranilate. It participates in amino-acid biosynthesis; L-tryptophan biosynthesis; L-tryptophan from chorismate: step 2/5. Its function is as follows. Catalyzes the transfer of the phosphoribosyl group of 5-phosphorylribose-1-pyrophosphate (PRPP) to anthranilate to yield N-(5'-phosphoribosyl)-anthranilate (PRA). The protein is Anthranilate phosphoribosyltransferase of Methanococcus maripaludis (strain C5 / ATCC BAA-1333).